A 161-amino-acid chain; its full sequence is 6,7-dimethyl-8-ribityllumazine synthase (161 aa).

Residues Trp-31, 63 to 65 (SFE), and 85 to 87 (VVI) contribute to the 5-amino-6-(D-ribitylamino)uracil site. A (2S)-2-hydroxy-3-oxobutyl phosphate-binding site is contributed by 90-91 (GT). The active-site Proton donor is His-93. Residue Phe-118 participates in 5-amino-6-(D-ribitylamino)uracil binding. Residue Arg-132 coordinates (2S)-2-hydroxy-3-oxobutyl phosphate.

It belongs to the DMRL synthase family.

It carries out the reaction (2S)-2-hydroxy-3-oxobutyl phosphate + 5-amino-6-(D-ribitylamino)uracil = 6,7-dimethyl-8-(1-D-ribityl)lumazine + phosphate + 2 H2O + H(+). Its pathway is cofactor biosynthesis; riboflavin biosynthesis; riboflavin from 2-hydroxy-3-oxobutyl phosphate and 5-amino-6-(D-ribitylamino)uracil: step 1/2. Its function is as follows. Catalyzes the formation of 6,7-dimethyl-8-ribityllumazine by condensation of 5-amino-6-(D-ribitylamino)uracil with 3,4-dihydroxy-2-butanone 4-phosphate. This is the penultimate step in the biosynthesis of riboflavin. The polypeptide is 6,7-dimethyl-8-ribityllumazine synthase (Paenarthrobacter aurescens (strain TC1)).